Here is a 284-residue protein sequence, read N- to C-terminus: BES1/BZR1 homolog protein 3 (284 aa).

Disordered regions lie at residues 1–21 (MTSGTRTPTWKERENNKRRER) and 85–116 (GSTSASPCSSYQHSPRASYNPSPSSSSFPSPT). The required for DNA-binding stretch occupies residues 6 to 88 (RTPTWKEREN…RMDLMNGSTS (83 aa)). Residues 85 to 97 (GSTSASPCSSYQH) are compositionally biased toward polar residues. Residues 98 to 114 (SPRASYNPSPSSSSFPS) are compositionally biased toward low complexity. At T153 the chain carries Phosphothreonine.

Belongs to the BZR/LAT61 family. Post-translationally, phosphorylated. Phosphorylation increases protein degradation.

The sequence is that of BES1/BZR1 homolog protein 3 (BEH3) from Arabidopsis thaliana (Mouse-ear cress).